Consider the following 299-residue polypeptide: Sulfate adenylyltransferase subunit 2 (299 aa).

The protein belongs to the PAPS reductase family. CysD subfamily. Sulfate-activating enzymes, NodP and NodQ, may be physically associated.

It carries out the reaction sulfate + ATP + H(+) = adenosine 5'-phosphosulfate + diphosphate. In terms of biological role, proposed to provide activated sulfate for transfer to nod factor. In Rhizobium sp. (strain BR816), this protein is Sulfate adenylyltransferase subunit 2 (nodP).